Consider the following 550-residue polypeptide: Dihydroxy-acid dehydratase (550 aa).

D78 is a Mg(2+) binding site. C119 contacts [2Fe-2S] cluster. D120 and K121 together coordinate Mg(2+). At K121 the chain carries N6-carboxylysine. C191 contributes to the [2Fe-2S] cluster binding site. E440 lines the Mg(2+) pocket. Catalysis depends on S466, which acts as the Proton acceptor.

Belongs to the IlvD/Edd family. In terms of assembly, homodimer. The cofactor is [2Fe-2S] cluster. Requires Mg(2+) as cofactor.

It carries out the reaction (2R)-2,3-dihydroxy-3-methylbutanoate = 3-methyl-2-oxobutanoate + H2O. The catalysed reaction is (2R,3R)-2,3-dihydroxy-3-methylpentanoate = (S)-3-methyl-2-oxopentanoate + H2O. It functions in the pathway amino-acid biosynthesis; L-isoleucine biosynthesis; L-isoleucine from 2-oxobutanoate: step 3/4. It participates in amino-acid biosynthesis; L-valine biosynthesis; L-valine from pyruvate: step 3/4. Its function is as follows. Functions in the biosynthesis of branched-chain amino acids. Catalyzes the dehydration of (2R,3R)-2,3-dihydroxy-3-methylpentanoate (2,3-dihydroxy-3-methylvalerate) into 2-oxo-3-methylpentanoate (2-oxo-3-methylvalerate) and of (2R)-2,3-dihydroxy-3-methylbutanoate (2,3-dihydroxyisovalerate) into 2-oxo-3-methylbutanoate (2-oxoisovalerate), the penultimate precursor to L-isoleucine and L-valine, respectively. The protein is Dihydroxy-acid dehydratase of Methanococcus maripaludis (strain C5 / ATCC BAA-1333).